The primary structure comprises 180 residues: Adenine phosphoribosyltransferase (180 aa).

At Ser-2 the chain carries N-acetylserine. 2 positions are modified to phosphoserine: Ser-15 and Ser-30. Phosphotyrosine is present on Tyr-60. Position 66 is a phosphoserine (Ser-66). The residue at position 114 (Lys-114) is an N6-acetyllysine. Thr-135 carries the post-translational modification Phosphothreonine.

This sequence belongs to the purine/pyrimidine phosphoribosyltransferase family. In terms of assembly, homodimer.

It is found in the cytoplasm. The enzyme catalyses AMP + diphosphate = 5-phospho-alpha-D-ribose 1-diphosphate + adenine. The protein operates within purine metabolism; AMP biosynthesis via salvage pathway; AMP from adenine: step 1/1. In terms of biological role, catalyzes a salvage reaction resulting in the formation of AMP, that is energically less costly than de novo synthesis. This chain is Adenine phosphoribosyltransferase, found in Mus musculus (Mouse).